The following is a 159-amino-acid chain: Ribosomal RNA large subunit methyltransferase H (159 aa).

S-adenosyl-L-methionine contacts are provided by residues leucine 76, glycine 108, and 127 to 132 (FSKMTF).

It belongs to the RNA methyltransferase RlmH family. As to quaternary structure, homodimer.

The protein localises to the cytoplasm. The enzyme catalyses pseudouridine(1915) in 23S rRNA + S-adenosyl-L-methionine = N(3)-methylpseudouridine(1915) in 23S rRNA + S-adenosyl-L-homocysteine + H(+). Specifically methylates the pseudouridine at position 1915 (m3Psi1915) in 23S rRNA. The sequence is that of Ribosomal RNA large subunit methyltransferase H from Exiguobacterium sibiricum (strain DSM 17290 / CCUG 55495 / CIP 109462 / JCM 13490 / 255-15).